The following is a 212-amino-acid chain: LexA repressor (212 aa).

Positions 29–49 (VREIGEAVGLSSSSTIHGHIE) form a DNA-binding region, H-T-H motif. Residues Ser133 and Lys171 each act as for autocatalytic cleavage activity in the active site.

It belongs to the peptidase S24 family. As to quaternary structure, homodimer.

The catalysed reaction is Hydrolysis of Ala-|-Gly bond in repressor LexA.. Functionally, represses a number of genes involved in the response to DNA damage (SOS response), including recA and lexA. In the presence of single-stranded DNA, RecA interacts with LexA causing an autocatalytic cleavage which disrupts the DNA-binding part of LexA, leading to derepression of the SOS regulon and eventually DNA repair. This chain is LexA repressor, found in Leuconostoc mesenteroides subsp. mesenteroides (strain ATCC 8293 / DSM 20343 / BCRC 11652 / CCM 1803 / JCM 6124 / NCDO 523 / NBRC 100496 / NCIMB 8023 / NCTC 12954 / NRRL B-1118 / 37Y).